Consider the following 473-residue polypeptide: ATP synthase subunit beta (473 aa).

158–165 (GGAGVGKT) provides a ligand contact to ATP.

The protein belongs to the ATPase alpha/beta chains family. F-type ATPases have 2 components, CF(1) - the catalytic core - and CF(0) - the membrane proton channel. CF(1) has five subunits: alpha(3), beta(3), gamma(1), delta(1), epsilon(1). CF(0) has three main subunits: a(1), b(2) and c(9-12). The alpha and beta chains form an alternating ring which encloses part of the gamma chain. CF(1) is attached to CF(0) by a central stalk formed by the gamma and epsilon chains, while a peripheral stalk is formed by the delta and b chains.

It is found in the cell membrane. It catalyses the reaction ATP + H2O + 4 H(+)(in) = ADP + phosphate + 5 H(+)(out). In terms of biological role, produces ATP from ADP in the presence of a proton gradient across the membrane. The catalytic sites are hosted primarily by the beta subunits. The polypeptide is ATP synthase subunit beta (Bacillus sp. (strain PS3)).